The sequence spans 246 residues: Adenosine 5'-phosphosulfate reductase (246 aa).

4 residues coordinate [4Fe-4S] cluster: C131, C132, C214, and C217. The active-site Nucleophile; cysteine thiosulfonate intermediate is the C242.

Belongs to the PAPS reductase family. CysH subfamily. The cofactor is [4Fe-4S] cluster.

Its subcellular location is the cytoplasm. The catalysed reaction is [thioredoxin]-disulfide + sulfite + AMP + 2 H(+) = adenosine 5'-phosphosulfate + [thioredoxin]-dithiol. The protein operates within sulfur metabolism; hydrogen sulfide biosynthesis; sulfite from sulfate. Catalyzes the formation of sulfite from adenosine 5'-phosphosulfate (APS) using thioredoxin as an electron donor. This is Adenosine 5'-phosphosulfate reductase from Neisseria meningitidis serogroup B (strain ATCC BAA-335 / MC58).